Consider the following 1190-residue polypeptide: JNK-interacting protein (1190 aa).

The interval 1–35 (MACNLSPVNEMADSITSSTPSEIVYGGPGSPDEHR) is disordered. One can recognise an RH1 domain in the interval 24–112 (VYGGPGSPDE…QTQYEREKAL (89 aa)). A coiled-coil region spans residues 78–165 (LDLAYLERDE…TDHASRLEER (88 aa)). A disordered region spans residues 263 to 364 (DEFSSDIEPS…DDTSDDGSLG (102 aa)). Positions 277–292 (PQSSADALTSPITTKE) are enriched in polar residues. The stretch at 383–491 (KNALNIVKND…EESIKWTEMQ (109 aa)) forms a coiled coil. In terms of domain architecture, RH2 spans 456-542 (RKRFTRSEMQ…RASSSRGKMT (87 aa)). Residues 775–829 (EDGVPTYCSNDMKPSPKRTRDFSISEVAPVDSSAPVKEDPLPPPANRPGGRAALP) are disordered.

It belongs to the JIP scaffold family. Expressed in neurons of the ventral cord, retrovesicular and preanal ganglia and nerve ring, intestinal cells, seam and hypodermal cells, body wall, head muscle and pharynx.

It is found in the cytoplasm. The protein resides in the perinuclear region. Its function is as follows. The JNK-interacting protein (JIP) group of scaffold proteins selectively mediates JNK signaling by aggregating specific components of the MAPK cascade to form a functional JNK signaling module. May function as a regulator of synaptic vesicle transport, through interactions with the JNK-signaling components and motor proteins. Binds specific components of the JNK signaling pathway namely jnk-1, jkk-1 and sek-1. Associates with components of the motor protein, kinesin-1. Pre-assembled unc-16 scaffolding complexes are then transported as a cargo of kinesin, to the required subcellular location. Regulates the retrograde transport of autophagosomes from the neurites to the cell body of AIY interneurons. This chain is JNK-interacting protein, found in Caenorhabditis elegans.